Reading from the N-terminus, the 339-residue chain is MVDPIVTKNWRDLIKPRGLVVDQDSLSNTYGKFVAEPLERGFGITLGNSLRRVLLSSLQGAAITSVKVEGVEHEFMTIPEVAEDVTDIILNLKEVLLQIHTNDVKTIRIEADGPKEIKAGDLITDAQVEVLNPGHHILTISEGGRVRAEMTARRGRGYVPAERNKVPGSPIGTIPIDALFSPIRKVNYQVTNARVGQQTDYDKLTLEVWTDGSVAPADAVAFAAKIVKEQLSIFINFDEAEEPAEEIKPVEEQKLNENLFRSVDELELSVRSANCLQNANIKTIGDLVQKTEAEMLKTKNFGRKSLKEIKEILAEMGLSLGMKLENWPPKAAPQGAPKV.

Residues 1 to 238 form an alpha N-terminal domain (alpha-NTD) region; that stretch reads MVDPIVTKNW…EQLSIFINFD (238 aa). An alpha C-terminal domain (alpha-CTD) region spans residues 250-339; that stretch reads VEEQKLNENL…KAAPQGAPKV (90 aa).

The protein belongs to the RNA polymerase alpha chain family. In terms of assembly, homodimer. The RNAP catalytic core consists of 2 alpha, 1 beta, 1 beta' and 1 omega subunit. When a sigma factor is associated with the core the holoenzyme is formed, which can initiate transcription.

The catalysed reaction is RNA(n) + a ribonucleoside 5'-triphosphate = RNA(n+1) + diphosphate. DNA-dependent RNA polymerase catalyzes the transcription of DNA into RNA using the four ribonucleoside triphosphates as substrates. The polypeptide is DNA-directed RNA polymerase subunit alpha (Anaeromyxobacter dehalogenans (strain 2CP-C)).